Reading from the N-terminus, the 363-residue chain is UDP-N-acetylglucosamine--N-acetylmuramyl-(pentapeptide) pyrophosphoryl-undecaprenol N-acetylglucosamine transferase (363 aa).

UDP-N-acetyl-alpha-D-glucosamine contacts are provided by residues 13 to 15 (TGG), Asn-125, Arg-166, Ser-195, Ile-249, 268 to 273 (ALTVSE), and Gln-294.

This sequence belongs to the glycosyltransferase 28 family. MurG subfamily.

The protein localises to the cell inner membrane. It catalyses the reaction di-trans,octa-cis-undecaprenyl diphospho-N-acetyl-alpha-D-muramoyl-L-alanyl-D-glutamyl-meso-2,6-diaminopimeloyl-D-alanyl-D-alanine + UDP-N-acetyl-alpha-D-glucosamine = di-trans,octa-cis-undecaprenyl diphospho-[N-acetyl-alpha-D-glucosaminyl-(1-&gt;4)]-N-acetyl-alpha-D-muramoyl-L-alanyl-D-glutamyl-meso-2,6-diaminopimeloyl-D-alanyl-D-alanine + UDP + H(+). It participates in cell wall biogenesis; peptidoglycan biosynthesis. Its function is as follows. Cell wall formation. Catalyzes the transfer of a GlcNAc subunit on undecaprenyl-pyrophosphoryl-MurNAc-pentapeptide (lipid intermediate I) to form undecaprenyl-pyrophosphoryl-MurNAc-(pentapeptide)GlcNAc (lipid intermediate II). This is UDP-N-acetylglucosamine--N-acetylmuramyl-(pentapeptide) pyrophosphoryl-undecaprenol N-acetylglucosamine transferase from Cellvibrio japonicus (strain Ueda107) (Pseudomonas fluorescens subsp. cellulosa).